The sequence spans 680 residues: tRNA 5-methylaminomethyl-2-thiouridine biosynthesis bifunctional protein MnmC (680 aa).

Positions 1-267 are tRNA (mnm(5)s(2)U34)-methyltransferase; the sequence is MTAEPNKPCQ…MAAILSSDAP (267 aa). The tract at residues 273 to 680 is FAD-dependent cmnm(5)s(2)U34 oxidoreductase; sequence IGGGLASAHL…LRKLLKGKSL (408 aa).

The protein in the N-terminal section; belongs to the methyltransferase superfamily. tRNA (mnm(5)s(2)U34)-methyltransferase family. This sequence in the C-terminal section; belongs to the DAO family. The cofactor is FAD.

Its subcellular location is the cytoplasm. It catalyses the reaction 5-aminomethyl-2-thiouridine(34) in tRNA + S-adenosyl-L-methionine = 5-methylaminomethyl-2-thiouridine(34) in tRNA + S-adenosyl-L-homocysteine + H(+). Its function is as follows. Catalyzes the last two steps in the biosynthesis of 5-methylaminomethyl-2-thiouridine (mnm(5)s(2)U) at the wobble position (U34) in tRNA. Catalyzes the FAD-dependent demodification of cmnm(5)s(2)U34 to nm(5)s(2)U34, followed by the transfer of a methyl group from S-adenosyl-L-methionine to nm(5)s(2)U34, to form mnm(5)s(2)U34. The polypeptide is tRNA 5-methylaminomethyl-2-thiouridine biosynthesis bifunctional protein MnmC (Shewanella sp. (strain W3-18-1)).